We begin with the raw amino-acid sequence, 203 residues long: Proteasome subunit beta 2 (203 aa).

Residues 1 to 9 (MGEEFQVGA) constitute a propeptide, removed in mature form; by autocatalysis. T10 serves as the catalytic Nucleophile.

This sequence belongs to the peptidase T1B family. In terms of assembly, the 20S proteasome core is composed of 14 alpha and 14 beta subunits that assemble into four stacked heptameric rings, resulting in a barrel-shaped structure. The two inner rings, each composed of seven catalytic beta subunits, are sandwiched by two outer rings, each composed of seven alpha subunits. The catalytic chamber with the active sites is on the inside of the barrel. Has a gated structure, the ends of the cylinder being occluded by the N-termini of the alpha-subunits. Is capped at one or both ends by the proteasome regulatory ATPase, PAN.

The protein localises to the cytoplasm. It catalyses the reaction Cleavage of peptide bonds with very broad specificity.. The formation of the proteasomal ATPase PAN-20S proteasome complex, via the docking of the C-termini of PAN into the intersubunit pockets in the alpha-rings, triggers opening of the gate for substrate entry. Interconversion between the open-gate and close-gate conformations leads to a dynamic regulation of the 20S proteasome proteolysis activity. In terms of biological role, component of the proteasome core, a large protease complex with broad specificity involved in protein degradation. This is Proteasome subunit beta 2 from Pyrobaculum neutrophilum (strain DSM 2338 / JCM 9278 / NBRC 100436 / V24Sta) (Thermoproteus neutrophilus).